We begin with the raw amino-acid sequence, 433 residues long: Tol-Pal system protein TolB (433 aa).

An N-terminal signal peptide occupies residues 1-21 (MINLFRGLLVVLCFASAMVSA).

The protein belongs to the TolB family. In terms of assembly, the Tol-Pal system is composed of five core proteins: the inner membrane proteins TolA, TolQ and TolR, the periplasmic protein TolB and the outer membrane protein Pal. They form a network linking the inner and outer membranes and the peptidoglycan layer.

It is found in the periplasm. Part of the Tol-Pal system, which plays a role in outer membrane invagination during cell division and is important for maintaining outer membrane integrity. The polypeptide is Tol-Pal system protein TolB (Pseudomonas syringae pv. syringae (strain B728a)).